Here is an 89-residue protein sequence, read N- to C-terminus: MKTKMSFGEALEVLKQGMQVYRSGWNGKNMFLFLKSSDALASDFGFGFGEYINEPVFGNIIFIKTADNKIHAWVPSQTDVLAEDWDIVS.

2 residues coordinate 3'cADPR: tryptophan 25 and asparagine 26. Residue serine 42 coordinates Mg(2+). 3'cADPR contacts are provided by tryptophan 73 and aspartate 79.

Homotetramer.

Functionally, counteracts the host Thoeris antiviral defense system. Probably acts by binding and sequestering cyclic ADP-D-ribose signal molecules produced upon viral infection (3'cADPR or 2'cADPR); sequestration prevents the signal from activating the ThsA of the Thoeris antiviral defense system. The protein is Thoeris anti-defense 2 of Bacillus phage SP01 (Bacteriophage SP01).